A 234-amino-acid chain; its full sequence is Ribonuclease HII (234 aa).

The 188-residue stretch at 47 to 234 (IRIAGVDEVG…KTVHKILYQE (188 aa)) folds into the RNase H type-2 domain. The a divalent metal cation site is built by Asp53, Glu54, and Asp144.

Belongs to the RNase HII family. The cofactor is Mn(2+). Mg(2+) serves as cofactor.

The protein resides in the cytoplasm. It catalyses the reaction Endonucleolytic cleavage to 5'-phosphomonoester.. Its function is as follows. Endonuclease that specifically degrades the RNA of RNA-DNA hybrids. This is Ribonuclease HII from Ruegeria pomeroyi (strain ATCC 700808 / DSM 15171 / DSS-3) (Silicibacter pomeroyi).